The sequence spans 265 residues: MTSFNSGRPVHVVIPARYGSTRLPGKPLVDLAGEPMIARVHARVSRALPGADIVVAIDDARIAAALDARGIRFAMTGAHHASGTDRAAELARVSGWHDTDVVLNVQGDEPLVPEALLKAFADFCVAAPDLGIATVACPVGDAALLDEPGIVKLVVDRRGRALYFSRAAIPFCRDGRSAGADLGGHLRHIGLYGYSNAALQALAHTAPCELEQLEQLEQLRALWLGMPIDVMRWPDAPPAGVDTPDDVARVVSLLKRQTQDETEPY.

The protein belongs to the KdsB family.

It localises to the cytoplasm. The enzyme catalyses 3-deoxy-alpha-D-manno-oct-2-ulosonate + CTP = CMP-3-deoxy-beta-D-manno-octulosonate + diphosphate. The protein operates within nucleotide-sugar biosynthesis; CMP-3-deoxy-D-manno-octulosonate biosynthesis; CMP-3-deoxy-D-manno-octulosonate from 3-deoxy-D-manno-octulosonate and CTP: step 1/1. Its pathway is bacterial outer membrane biogenesis; lipopolysaccharide biosynthesis. In terms of biological role, activates KDO (a required 8-carbon sugar) for incorporation into bacterial lipopolysaccharide in Gram-negative bacteria. The chain is 3-deoxy-manno-octulosonate cytidylyltransferase 2 from Burkholderia lata (strain ATCC 17760 / DSM 23089 / LMG 22485 / NCIMB 9086 / R18194 / 383).